The sequence spans 181 residues: Organ-specific protein S2 (181 aa).

4 consecutive repeat copies span residues 59 to 84, 85 to 110, 111 to 136, and 137 to 162. The segment at 59-162 is 4 X 26 AA tandem repeats; the sequence is HAKENMGAIG…NASAYGDNEI (104 aa). The interval 94-181 is disordered; that stretch reads GEFEPRPNAS…PRPSMTKYNA (88 aa).

To organ specific protein P4. Expressed in stems.

The protein is Organ-specific protein S2 of Pisum sativum (Garden pea).